The primary structure comprises 376 residues: UDP-N-acetylenolpyruvoylglucosamine reductase (376 aa).

The 172-residue stretch at 48–219 (VGGPARHLVI…LDVTMQFNLG (172 aa)) folds into the FAD-binding PCMH-type domain. The active site involves arginine 196. Serine 274 acts as the Proton donor in catalysis. Residue glutamate 368 is part of the active site.

It belongs to the MurB family. FAD serves as cofactor.

The protein resides in the cytoplasm. It catalyses the reaction UDP-N-acetyl-alpha-D-muramate + NADP(+) = UDP-N-acetyl-3-O-(1-carboxyvinyl)-alpha-D-glucosamine + NADPH + H(+). It participates in cell wall biogenesis; peptidoglycan biosynthesis. Cell wall formation. The protein is UDP-N-acetylenolpyruvoylglucosamine reductase of Cutibacterium acnes (strain DSM 16379 / KPA171202) (Propionibacterium acnes).